The chain runs to 579 residues: Glypican-2 (579 aa).

An N-terminal signal peptide occupies residues Met1–Gly23. Ser55, Ser92, and Ser155 each carry an O-linked (Xyl...) (heparan sulfate) serine glycan. Disordered stretches follow at residues Gly444–Arg468 and Ala485–Gly555. Ser500 and Ser502 each carry an O-linked (Xyl...) (heparan sulfate) serine glycan. The span at Pro520–Pro529 shows a compositional bias: pro residues. A lipid anchor (GPI-anchor amidated glycine) is attached at Gly554. Positions Gly555–Arg579 are cleaved as a propeptide — removed in mature form.

It belongs to the glypican family. In terms of assembly, interacts (via heparan sulfate) with PTN; this interaction promotes neurite outgrowth through binding of PTN with chondroitin sulfate of proteoglycans, thereby releasing PTPRS of chondroitin sulfate proteoglycans (CSPGs) and leading to binding with heparan sulfate of GPC2. Interacts (heparan sulfate chain) with MDK; this interaction is inhibited by heparin followed by chondroitin sulfate E; this interaction induces GPC2 clustering through heparan sulfate chain; this interaction induces neuronal cell adhesion and neurite outgrowth.

It is found in the cell membrane. It localises to the secreted. The protein resides in the extracellular space. Its function is as follows. Cell surface proteoglycan that bears heparan sulfate. May fulfill a function related to the motile behaviors of developing neurons. The sequence is that of Glypican-2 (GPC2) from Homo sapiens (Human).